A 371-amino-acid chain; its full sequence is Beta sliding clamp (371 aa).

It belongs to the beta sliding clamp family. Forms a ring-shaped head-to-tail homodimer around DNA which binds and tethers DNA polymerases and other proteins to the DNA. The DNA replisome complex has a single clamp-loading complex (3 tau and 1 each of delta, delta', psi and chi subunits) which binds 3 Pol III cores (1 core on the leading strand and 2 on the lagging strand) each with a beta sliding clamp dimer. Additional proteins in the replisome are other copies of gamma, psi and chi, Ssb, DNA helicase and RNA primase.

It localises to the cytoplasm. Functionally, confers DNA tethering and processivity to DNA polymerases and other proteins. Acts as a clamp, forming a ring around DNA (a reaction catalyzed by the clamp-loading complex) which diffuses in an ATP-independent manner freely and bidirectionally along dsDNA. Initially characterized for its ability to contact the catalytic subunit of DNA polymerase III (Pol III), a complex, multichain enzyme responsible for most of the replicative synthesis in bacteria; Pol III exhibits 3'-5' exonuclease proofreading activity. The beta chain is required for initiation of replication as well as for processivity of DNA replication. In Treponema pallidum (strain Nichols), this protein is Beta sliding clamp (dnaN).